Reading from the N-terminus, the 462-residue chain is MSKAHVVGLGKSGVAAARLLKREGWEVVLSDSNTSDTLLKQQQELAKEQITVELGYSLDFAGALPDLIIVSPGVPWDIPDLVKARDLGIETIGEMELAWRHLKSLPWVGITGTNGKTTTTALIAAIFQAAGFDAPACGNIGYAACEVALAEIPPDWIIGEMSSYQIESSVTLAPHISIWTTFTPDHLARHKTLENYYDIKAKLLRQSHLQVFNGDDAYLSKIGASHWPDAYWTSVQGKESLLGEKGFYIEDGWVVEQLPNSPPQRIVEASALRMVGAHNLQNLLMAVAAARLADISPNAIDKAVREFPGVAHRLEHICTWEGIDFINDSKATNYDAAEVGLASVKSPVVLIAGGEAKPGDDTAWLAKIQAQTSAVLLIGSAAPAFAQRLKEVGYTHYEIVETMEKAVRRSLELAKHHQAPVVLLSPACASFDQYPNFEARGDHFRELCLELVGEKETNSNHH.

Position 112 to 118 (112 to 118 (GTNGKTT)) interacts with ATP.

It belongs to the MurCDEF family.

It is found in the cytoplasm. The enzyme catalyses UDP-N-acetyl-alpha-D-muramoyl-L-alanine + D-glutamate + ATP = UDP-N-acetyl-alpha-D-muramoyl-L-alanyl-D-glutamate + ADP + phosphate + H(+). It participates in cell wall biogenesis; peptidoglycan biosynthesis. Functionally, cell wall formation. Catalyzes the addition of glutamate to the nucleotide precursor UDP-N-acetylmuramoyl-L-alanine (UMA). This Nostoc sp. (strain PCC 7120 / SAG 25.82 / UTEX 2576) protein is UDP-N-acetylmuramoylalanine--D-glutamate ligase.